Reading from the N-terminus, the 190-residue chain is MEKEKVLEIFEKLEVINKGHFLLSSGKHSDTYLQCAKIFQYPNYSEIFSRELAEKFKGYRIDVVIGPAIGGIILAYEVARQIGVRALFAEREDNVMKLRRGFEISKGERVLVVEDVVTTGGSVKEVIELVRSLGGEVIGVGTIVDRSDGKIDFGVPFESIVKLQIKTYEKEECPLCKEGIPLVKPGSRKL.

114–122 (EDVVTTGGS) lines the 5-phospho-alpha-D-ribose 1-diphosphate pocket. Orotate contacts are provided by Thr-118 and Arg-146.

It belongs to the purine/pyrimidine phosphoribosyltransferase family. PyrE subfamily. As to quaternary structure, homodimer. It depends on Mg(2+) as a cofactor.

It catalyses the reaction orotidine 5'-phosphate + diphosphate = orotate + 5-phospho-alpha-D-ribose 1-diphosphate. The protein operates within pyrimidine metabolism; UMP biosynthesis via de novo pathway; UMP from orotate: step 1/2. Its function is as follows. Catalyzes the transfer of a ribosyl phosphate group from 5-phosphoribose 1-diphosphate to orotate, leading to the formation of orotidine monophosphate (OMP). The protein is Orotate phosphoribosyltransferase of Caldanaerobacter subterraneus subsp. tengcongensis (strain DSM 15242 / JCM 11007 / NBRC 100824 / MB4) (Thermoanaerobacter tengcongensis).